Reading from the N-terminus, the 203-residue chain is Small ribosomal subunit protein uS4 (203 aa).

The region spanning 93 to 156 (RRLDNVVYRL…MKVPAILEAV (64 aa)) is the S4 RNA-binding domain.

It belongs to the universal ribosomal protein uS4 family. In terms of assembly, part of the 30S ribosomal subunit. Contacts protein S5. The interaction surface between S4 and S5 is involved in control of translational fidelity.

Its function is as follows. One of the primary rRNA binding proteins, it binds directly to 16S rRNA where it nucleates assembly of the body of the 30S subunit. Functionally, with S5 and S12 plays an important role in translational accuracy. The chain is Small ribosomal subunit protein uS4 from Streptococcus pyogenes serotype M1.